The following is a 201-amino-acid chain: UPF0301 protein Smed_0532 (201 aa).

This sequence belongs to the UPF0301 (AlgH) family.

The sequence is that of UPF0301 protein Smed_0532 from Sinorhizobium medicae (strain WSM419) (Ensifer medicae).